Here is a 513-residue protein sequence, read N- to C-terminus: GMP synthase [glutamine-hydrolyzing] (513 aa).

The Glutamine amidotransferase type-1 domain maps to 5-195 (LVLVIDFGGQ…VYNICGCTGD (191 aa)). The active-site Nucleophile is the C82. Catalysis depends on residues H169 and E171. Positions 196-388 (WKMDSFVEKT…LGIPEKLVFR (193 aa)) constitute a GMPS ATP-PPase domain. 223–229 (SGGVDSS) is a binding site for ATP.

Homodimer.

The catalysed reaction is XMP + L-glutamine + ATP + H2O = GMP + L-glutamate + AMP + diphosphate + 2 H(+). It participates in purine metabolism; GMP biosynthesis; GMP from XMP (L-Gln route): step 1/1. Functionally, catalyzes the synthesis of GMP from XMP. This chain is GMP synthase [glutamine-hydrolyzing], found in Clostridium botulinum (strain Alaska E43 / Type E3).